The sequence spans 175 residues: MTSSAMDNNEPKVLEMVYDATILPEGSSMDPNIMDCINRHINMCIQRTYSSSIIAILDRFLMMNKDELNNTQCHIIKEFMTYEQMAIDHYGGYVNAILYQIRKRPNQHHTIDLFKRIKRTRYDTFKVDPVEFVKKVIGFVSILNKYKPVYSYVLYENVLYDEFKCFINYVETKYF.

It belongs to the poxviridae OPG036 family.

Its subcellular location is the host nucleus. In terms of biological role, plays a role in the inhibition of host innate immune response. Within the host nucleus, inhibits activation of interferon-beta promoter by inhibiting IRF3 activation. This chain is Protein OPG036 (OPG036), found in Bos taurus (Bovine).